We begin with the raw amino-acid sequence, 444 residues long: tRNA-2-methylthio-N(6)-dimethylallyladenosine synthase (444 aa).

The MTTase N-terminal domain occupies Lys-2 to Gln-119. [4Fe-4S] cluster is bound by residues Cys-11, Cys-48, Cys-82, Cys-156, Cys-160, and Cys-163. A Radical SAM core domain is found at Lys-142–Ala-374. Positions Gln-377–Thr-440 constitute a TRAM domain.

The protein belongs to the methylthiotransferase family. MiaB subfamily. In terms of assembly, monomer. The cofactor is [4Fe-4S] cluster.

It is found in the cytoplasm. The enzyme catalyses N(6)-dimethylallyladenosine(37) in tRNA + (sulfur carrier)-SH + AH2 + 2 S-adenosyl-L-methionine = 2-methylsulfanyl-N(6)-dimethylallyladenosine(37) in tRNA + (sulfur carrier)-H + 5'-deoxyadenosine + L-methionine + A + S-adenosyl-L-homocysteine + 2 H(+). Functionally, catalyzes the methylthiolation of N6-(dimethylallyl)adenosine (i(6)A), leading to the formation of 2-methylthio-N6-(dimethylallyl)adenosine (ms(2)i(6)A) at position 37 in tRNAs that read codons beginning with uridine. This is tRNA-2-methylthio-N(6)-dimethylallyladenosine synthase from Chromobacterium violaceum (strain ATCC 12472 / DSM 30191 / JCM 1249 / CCUG 213 / NBRC 12614 / NCIMB 9131 / NCTC 9757 / MK).